Here is a 315-residue protein sequence, read N- to C-terminus: HVA22-like protein h (315 aa).

Positions 148-315 (PKPKPKEKKQ…RKARSAGAPR (168 aa)) are disordered. The span at 173–190 (ATSQAASSNPQVRLQSKK) shows a compositional bias: polar residues. The segment covering 234 to 248 (PPGPPPPPPPPPPSP) has biased composition (pro residues).

The protein belongs to the DP1 family.

The chain is HVA22-like protein h (HVA22H) from Arabidopsis thaliana (Mouse-ear cress).